Reading from the N-terminus, the 137-residue chain is Neutral phospholipase A2 ammodytin I2 (137 aa).

The signal sequence occupies residues 1–16 (MRTLWIVAVCLIGVEG). 7 disulfide bridges follow: Cys42/Cys131, Cys44/Cys60, Cys59/Cys111, Cys65/Cys137, Cys66/Cys104, Cys73/Cys97, and Cys91/Cys102. 3 residues coordinate Ca(2+): Tyr43, Gly45, and Gly47. Residue His63 is part of the active site. A Ca(2+)-binding site is contributed by Asp64. Asp105 is a catalytic residue.

The protein belongs to the phospholipase A2 family. Group II subfamily. D49 sub-subfamily. It depends on Ca(2+) as a cofactor. As to expression, expressed by the venom gland.

The protein localises to the secreted. It catalyses the reaction a 1,2-diacyl-sn-glycero-3-phosphocholine + H2O = a 1-acyl-sn-glycero-3-phosphocholine + a fatty acid + H(+). In terms of biological role, snake venom phospholipase A2 (PLA2) that has enzymatic activity but is non-toxic. Displays low binding affinity and enzymatic activity on phosphatidylserine-containing vesicles and HEK-293 plasma membranes, in contrast to ammodytoxins that have high activity on these phospholipids. PLA2 catalyzes the calcium-dependent hydrolysis of the 2-acyl groups in 3-sn-phosphoglycerides. The polypeptide is Neutral phospholipase A2 ammodytin I2 (Vipera ammodytes ammodytes (Western sand viper)).